We begin with the raw amino-acid sequence, 379 residues long: Small ribosomal subunit protein uS2cy (379 aa).

The tract at residues 1-94 is N-terminal extension; the sequence is MKLVQFFEIG…MGTSSNRAKS (94 aa). A disordered region spans residues 83–106; sequence NQMGTSSNRAKSTDTPAVSTSQNV.

The protein belongs to the universal ribosomal protein uS2 family.

It is found in the plastid. The protein localises to the chloroplast. This is Small ribosomal subunit protein uS2cy (rps2-2) from Tetradesmus obliquus (Green alga).